Consider the following 267-residue polypeptide: 3-methyl-2-oxobutanoate hydroxymethyltransferase (267 aa).

Mg(2+)-binding residues include Asp45 and Asp84. 3-methyl-2-oxobutanoate is bound by residues 45 to 46, Asp84, and Lys113; that span reads DS. Glu115 serves as a coordination point for Mg(2+). Glu182 acts as the Proton acceptor in catalysis.

The protein belongs to the PanB family. In terms of assembly, homodecamer; pentamer of dimers. It depends on Mg(2+) as a cofactor.

Its subcellular location is the cytoplasm. It catalyses the reaction 3-methyl-2-oxobutanoate + (6R)-5,10-methylene-5,6,7,8-tetrahydrofolate + H2O = 2-dehydropantoate + (6S)-5,6,7,8-tetrahydrofolate. The protein operates within cofactor biosynthesis; coenzyme A biosynthesis. Its function is as follows. Catalyzes the reversible reaction in which hydroxymethyl group from 5,10-methylenetetrahydrofolate is transferred onto alpha-ketoisovalerate to form ketopantoate. The chain is 3-methyl-2-oxobutanoate hydroxymethyltransferase from Saccharolobus islandicus (strain L.S.2.15 / Lassen #1) (Sulfolobus islandicus).